The sequence spans 386 residues: Patatin group M-1 (386 aa).

Residues 1 to 23 form the signal peptide; it reads MATTKSFLILFFMILATTSSTCA. The region spanning 32-229 is the PNPLA domain; sequence LSIDGGGIKG…TVGDPALLSL (198 aa). The GXGXXG signature appears at 36–41; that stretch reads GGGIKG. The GXSXG motif lies at 75–79; the sequence is GTSTG. Catalysis depends on S77, which acts as the Nucleophile. Residue N115 is glycosylated (N-linked (GlcNAc...) asparagine). Residue D215 is the Proton acceptor of the active site. The DGA/G motif lies at 215–217; the sequence is DGG.

The protein belongs to the patatin family. As to expression, tuber.

Its subcellular location is the vacuole. Its function is as follows. Probable lipolytic acyl hydrolase (LAH), an activity which is thought to be involved in the response of tubers to pathogens. This chain is Patatin group M-1, found in Solanum tuberosum (Potato).